The primary structure comprises 413 residues: uncharacterized protein (413 aa).

Positions 3–155 (MEPRVLRREE…SRVRLSVPAG (153 aa)) constitute an N-acetyltransferase domain. Acetyl-CoA contacts are provided by residues 86 to 88 (VSV), 94 to 99 (RRGVLT), and 122 to 123 (SE). Residue Tyr127 is the Proton donor of the active site. The Proton acceptor; via carboxylate role is filled by Phe413.

This sequence belongs to the acetyltransferase Eis family. In terms of assembly, homohexamer; trimer of dimers.

This is an uncharacterized protein from Streptomyces coelicolor (strain ATCC BAA-471 / A3(2) / M145).